The sequence spans 54 residues: Apelin receptor early endogenous ligand (54 aa).

Positions 1–25 are cleaved as a signal peptide; sequence MRFQPLFWVFFIFAMSLLFITEEKS.

Belongs to the Elabela/Toddler family. In terms of assembly, interacts with APLNR.

It localises to the secreted. Its subcellular location is the extracellular space. Peptide hormone that functions as endogenous ligand for the G-protein-coupled apelin receptor (APLNR/APJ), that plays a role in the regulation of normal cardiovascular function and fluid homeostasis. Functions as a balanced agonist activating both G(i) protein pathway and beta-arrestin pathway of APLNR. Downstream G proteins activation, apelin can inhibit cAMP production and activate key intracellular effectors such as ERKs. On the other hand, APLNR activation induces beta-arrestin recruitment to the membrane leading to desensitization and internalization of the receptor. Required for mesendodermal differentiation, blood vessels formation and heart morphogenesis during early development and for adult cardiovascular homeostasis. Acts as a motogen by promoting mesendodermal cell migration during gastrulation by binding and activating APLNR. Acts as an early embryonic regulator of cellular movement with a role in migration and development of cardiac progenitor cells. May act as a chemoattractant for the activation of angioblast migration toward the embryonic midline, i.e. the position of the future vessel formation, during vasculogenesis. Positively regulates sinus venosus (SV)-derived endothelial cells migration into the developing heart to promote coronary blood vessel sprouting. Plays a role in placental vascular development; promotes placental trophoblast invasion and spiral artery remodeling in the uterus. Involved in the regulation of maternal cardiovascular homeostasis to prevent gestational hypertension and for potent cardioprotective functions during heart failure. Mediates myocardial contractility in an ERK1/2-dependent manner. This is Apelin receptor early endogenous ligand from Rattus norvegicus (Rat).